Reading from the N-terminus, the 200-residue chain is Holliday junction branch migration complex subunit RuvA (200 aa).

Positions 1 to 63 (MYAYVKGKLT…EDAQLLYGFS (63 aa)) are domain I. Residues 64–142 (SEEEKDMFLS…ITEEDSDSLL (79 aa)) are domain II. Positions 143 to 149 (QVDATST) are flexible linker. The interval 150–200 (VQDQFVQEAMLALEALGYSKRELAKVEKTLNKNKYDSVDEAVKAGLQLVVS) is domain III.

It belongs to the RuvA family. In terms of assembly, homotetramer. Forms an RuvA(8)-RuvB(12)-Holliday junction (HJ) complex. HJ DNA is sandwiched between 2 RuvA tetramers; dsDNA enters through RuvA and exits via RuvB. An RuvB hexamer assembles on each DNA strand where it exits the tetramer. Each RuvB hexamer is contacted by two RuvA subunits (via domain III) on 2 adjacent RuvB subunits; this complex drives branch migration. In the full resolvosome a probable DNA-RuvA(4)-RuvB(12)-RuvC(2) complex forms which resolves the HJ.

Its subcellular location is the cytoplasm. Its function is as follows. The RuvA-RuvB-RuvC complex processes Holliday junction (HJ) DNA during genetic recombination and DNA repair, while the RuvA-RuvB complex plays an important role in the rescue of blocked DNA replication forks via replication fork reversal (RFR). RuvA specifically binds to HJ cruciform DNA, conferring on it an open structure. The RuvB hexamer acts as an ATP-dependent pump, pulling dsDNA into and through the RuvAB complex. HJ branch migration allows RuvC to scan DNA until it finds its consensus sequence, where it cleaves and resolves the cruciform DNA. This Staphylococcus aureus (strain USA300) protein is Holliday junction branch migration complex subunit RuvA.